The sequence spans 249 residues: Urease accessory protein UreG (249 aa).

Basic and acidic residues predominate over residues 1 to 13; that stretch reads MHLGHEEFQRTDG. Residues 1-34 form a disordered region; it reads MHLGHEEFQRTDGRASTGPADAGPAGAGRAPRIG. Low complexity predominate over residues 18-33; sequence GPADAGPAGAGRAPRI. GTP is bound at residue 37–44; sequence GPVGSGKT. A disordered region spans residues 229-249; sequence PRGGSYDASDASNASQPLNRM. Residues 238–249 are compositionally biased toward polar residues; that stretch reads DASNASQPLNRM.

It belongs to the SIMIBI class G3E GTPase family. UreG subfamily. Homodimer. UreD, UreF and UreG form a complex that acts as a GTP-hydrolysis-dependent molecular chaperone, activating the urease apoprotein by helping to assemble the nickel containing metallocenter of UreC. The UreE protein probably delivers the nickel.

The protein localises to the cytoplasm. In terms of biological role, facilitates the functional incorporation of the urease nickel metallocenter. This process requires GTP hydrolysis, probably effectuated by UreG. This chain is Urease accessory protein UreG, found in Frankia casuarinae (strain DSM 45818 / CECT 9043 / HFP020203 / CcI3).